A 236-amino-acid polypeptide reads, in one-letter code: Biosynthetic peptidoglycan transglycosylase (236 aa).

Residues A12–P31 traverse the membrane as a helical segment.

It belongs to the glycosyltransferase 51 family.

It localises to the cell inner membrane. It carries out the reaction [GlcNAc-(1-&gt;4)-Mur2Ac(oyl-L-Ala-gamma-D-Glu-L-Lys-D-Ala-D-Ala)](n)-di-trans,octa-cis-undecaprenyl diphosphate + beta-D-GlcNAc-(1-&gt;4)-Mur2Ac(oyl-L-Ala-gamma-D-Glu-L-Lys-D-Ala-D-Ala)-di-trans,octa-cis-undecaprenyl diphosphate = [GlcNAc-(1-&gt;4)-Mur2Ac(oyl-L-Ala-gamma-D-Glu-L-Lys-D-Ala-D-Ala)](n+1)-di-trans,octa-cis-undecaprenyl diphosphate + di-trans,octa-cis-undecaprenyl diphosphate + H(+). The protein operates within cell wall biogenesis; peptidoglycan biosynthesis. In terms of biological role, peptidoglycan polymerase that catalyzes glycan chain elongation from lipid-linked precursors. The polypeptide is Biosynthetic peptidoglycan transglycosylase (Pseudomonas savastanoi pv. phaseolicola (strain 1448A / Race 6) (Pseudomonas syringae pv. phaseolicola (strain 1448A / Race 6))).